The sequence spans 3092 residues: MDSQNIKYGDNDVAIIGIGLRLPSSINRPSELWEGFLAGFDGIVETTNRWSDSFASMDEISSKYADEWMSFDPLFFGIIPTEVPSIDPQQRLLLKCTWEAFEDANIDPFKLRGTNTSVYVGASSLDYASINVDFDETPMNIFNSNMSGVSNRISYCFDFRGASLTIDTACSSSLNAVHLGYKSIISGESDYSIVGGCNFIMSPHTSRSFESANVTSKTGKSKAFDQDANGFVRSEGVVSIILKKMSKAIQDGDQIYSVIKGTNSNVDGNLNKGNFFAPSKQSQANNIKSAMESCNKETTNSTPIALNDIDFFELHGTSTQIGDPIECEGVSSVFKESREKPLLIGSIKANIGHLEPASGVASLAKVALMFKHRQFVKNINFDKPNPNIKFDEWKIKVCTENTPFPNNKKVSIAINSFGITGSNVCLILTEYIKPTTTKTTNGTAILSTFPLLSTTTTATTNNNGNQKYLIPISANSKPSLESYKEKLINSSKEFSETINFKDFVKYQLDSKTLKLTQRSVIIASNWEEAGSTQSIITTNSNRSGNIIKDTNKNPQLVFVFSGQGPQWSKMFTQLYDQEPIFKQKTDQIDSLLSKHYGYSILNKLNSIKDDDTVTINEPILAQPSVFMIQMALIELYKHWGILASISIGHSLGEVSSAVCSGMIDLETGCFIIYHRSRLQQQTSGSGKMLVASLNEQKFNQEFDNFQQKYPSIEIACFNSPSSIVLAGKESELQEISNILKEQETFSIFLGAQSSFHSSSQEPIKDELLKQLKDIKSTKSNIPNFSTVTSNLFNDDDEVAQQPDEASAHNTNTITLFDSKYVYENVRKPVQFEKTIKNVFNYIEKKGLGSSVIFLEISASPVLGNYIREMIPQDSNYFFIEDQTISVLSSLNKKNKDQVLEIQTSISQLYCKGYNVNFNCSNQTNSLDFQNTEYKQLSDVLFKYSWDDESYWSVAPLISNYIKNGPAINQLGNRNERQPYQSYVSIIDIKKEPFEFFKGHSSRNRVIYPGCGYIDSILKAFPDQDLTIQSMEFKSAVLLLPSMKTYLSTNITPSGKNEYRVSFHYKDKKTNKWSLSCSGKFSITKHNDEVVRKFDIEKLKAKTNFVTIQKKELYETIKYKAQFTFEGKFQSIEEVSYGHNCCLAKVPLTTLSSYDNQSFLNLCVIDSAFQPFCAVKENKEPMLFSSIENLKFFSKNIPKSAEDREKHKFVYTYTQIKEKKCGSYFVSILTMLQDGTILFFSPLVVYTQLTPYKNQYIIESPNDNLYKICYQSKDSTLPSPLILKDKFDQLNFETTDEQSQIIRKALSNCLFAIFKRNNNLFTKEEIKSQSIDYLIEKYCLIIDNDDDNDGIDDNSILVNGGVASIDDMVLASTAGKETTILNNGKRVLAKLIFQILKSNVDLIDWDNIATFTNTSSKQQLNIIQAIDNLIVTPLSVTNQVTESDLISKTQLDIINNRMKIKQYELISNTIATDLIKPIINNSILFRILEINSGFGYLSEMIINKINQLLIEFENSYEIEIEFTFTLNGTNQDDNKEISNSIKEKLTNLLISKSSISIIFKELNLNESFLEQKFNPSYYDLIVLTNLSTITNLNESIEFINSILYPNGHLIIIDTKNQSNFQDYEIFEQFLIFDNFGGGIVDDNIDWNQIFQNNNLNNAIVTPNIQPHVIQVQKSKLYDKVMSTLDDITGPYDQIIIIGDQMQDTNEDLFQNPIMDINKQGTDIYRIKTIEEFEKHCLTIPPTDKSILFFISAMNNLSLGDYKQVNFDYIKINQYLLANKLRCPFILATRSALKESTNALAASLIGSFRYFSEFSNILNLYSFDFGEMVFTIASGSPFKWMNMAIDLLDPNKHIQREYIFRNGNETWFERIGKIKRVKSKYQSKSYLDDKEDSLVARLNQNLEYQLEAKQSNLKENEIEVQVVATGINFKDSLIFRNLVPPVLANHDGDYSKPEFGIECSGIVSRIGSKVTKFKVGDSVLGISWKSTSSHAINYQDAFVLKPDNISFVEAASIPLVYCTSFYSLFYSGNLKIENNESVLIHQASGGIGLACLNILKSCGFKSKLYVTVGSKEKEDYLRETYGDFITGIYSSRNTDFLENIKTDLSKINNNNNEIKENNTINESFDDVDQILPFIHKKGVDLIINTLPFEFLDTNFLLLGQGGRIVDLSVNHLNNNDTTDFSKFKWFIGYSTVEIFYNGFEKSKHILQLIIDMIKNKELPLIPIKEYPINQIKDAIEFIGQRKHIGKIVINHKVGLRDGCSNLVQDTIKSLQNHLKDNYLVASPDFKFMGDSLGKTILLTGQTGLSLSIIQISLLNNYQDLEGIIVISKSPIRNELQYLISFAKYLSRKTRVHFKQADCSKFDEISKAISEIYEKDDPNLSPVESIFHNAFVPVMSEPQDIGMKHIDDAYDAKTTGAMNLYLLAILNGWKLKNFFFSSSVASVSGSSRQAGYCGANLVLESIAKTIQSQGIRCSTICWGSIGDIGYVSRNESVSKYVHGLGNISMPSNMVLGSLDLLLQQPTLSTDTTIVASFDFNNLPKLSTNGSNNLYYKFDYFTNPIQSNQNNCSSDDLSIREEILAKFSEFLSVDDQSKINLDIKLLDYGADSMVIVELKNYLDKTYTPNILSIQQLQNVTINQLIQSVTDAMNKLNGNENKSIKKSNKLVQQKQIDWVKEIKLDSSIKPTDEMIKLFKQLQQQLASPTTTTSNTVFLTGSSGFIGIYILFYLIKSVNCKIVYCLIRRKTIEEATTFLIEFLKVHQLYNQLTTDEINKIKPVLGDYTLDSFGLSVDQYTNLSNNVDLIINSAASVSFLMDYEDSKVESVEGVLQCLRFSCHNKLKKFVQVSTLGVYSDDKRDNLDDYTFAQIDPKIIQSKNSIINGYLQGKIVSEYHIKEAANRGIPCCIIRLPFIGPNPSTGVGNDSDFFQTLLQSCYAMSTYPKQESGLQLYSTPVTWVAQNLSFISMNPKCWSTSSNNPSSISENLTCYNLFGESICFNVLLTELASQLKWKPTPPGEFLKKLKSFPNEPSCNKLHVVLKNSKNLLLNIYIPGNYKLNPTLKQLLQSNNTYKGWKITPEMILTHLSFTFKKIKFINYK.

One can recognise a Ketosynthase family 3 (KS3) domain in the interval 10–430 (DNDVAIIGIG…GSNVCLILTE (421 aa)). Residues C170, H315, and H353 each act as for beta-ketoacyl synthase activity in the active site. The tract at residues 640–673 (GILASISIGHSLGEVSSAVCSGMIDLETGCFIIY) is acyl/malonyl transferase. Catalysis depends on S650, which acts as the For acyl/malonyl transferase activity. Residues 967-1087 (INQLGNRNER…GKFSITKHND (121 aa)) are N-terminal hotdog fold. A PKS/mFAS DH domain is found at 967-1254 (INQLGNRNER…YTQLTPYKNQ (288 aa)). The active-site Proton acceptor; for dehydratase activity is H999. Positions 1103 to 1254 (NFVTIQKKEL…YTQLTPYKNQ (152 aa)) are C-terminal hotdog fold. Catalysis depends on D1165, which acts as the Proton donor; for dehydratase activity. The region spanning 2566–2644 (SDDLSIREEI…QLIQSVTDAM (79 aa)) is the Carrier domain. The residue at position 2604 (S2604) is an O-(pantetheine 4'-phosphoryl)serine. A helical membrane pass occupies residues 2705 to 2725 (NTVFLTGSSGFIGIYILFYLI).

Pantetheine 4'-phosphate serves as cofactor.

The protein localises to the membrane. Probable polyketide synthase. In Dictyostelium discoideum (Social amoeba), this protein is Probable polyketide synthase 45 (pks45).